The primary structure comprises 353 residues: Beta-hexosaminidase (353 aa).

Substrate is bound by residues Asp-74, Arg-82, Arg-149, and 179-180; that span reads KH. His-192 serves as the catalytic Proton donor/acceptor. Asp-263 serves as the catalytic Nucleophile.

The protein belongs to the glycosyl hydrolase 3 family. NagZ subfamily.

Its subcellular location is the cytoplasm. The enzyme catalyses Hydrolysis of terminal non-reducing N-acetyl-D-hexosamine residues in N-acetyl-beta-D-hexosaminides.. It functions in the pathway cell wall biogenesis; peptidoglycan recycling. Its function is as follows. Plays a role in peptidoglycan recycling by cleaving the terminal beta-1,4-linked N-acetylglucosamine (GlcNAc) from peptide-linked peptidoglycan fragments, giving rise to free GlcNAc, anhydro-N-acetylmuramic acid and anhydro-N-acetylmuramic acid-linked peptides. The polypeptide is Beta-hexosaminidase (Bordetella bronchiseptica (strain ATCC BAA-588 / NCTC 13252 / RB50) (Alcaligenes bronchisepticus)).